A 562-amino-acid polypeptide reads, in one-letter code: Glutamine--tRNA ligase (562 aa).

Positions 35-45 (PEPNGYLHIGH) match the 'HIGH' region motif. ATP is bound by residues 36 to 38 (EPN) and 42 to 48 (HIGHAKS). Residues Asp-68 and Tyr-213 each contribute to the L-glutamine site. ATP is bound by residues Thr-232, 262–263 (RL), and 270–272 (LSK). Residues 269–273 (ILSKR) carry the 'KMSKS' region motif.

It belongs to the class-I aminoacyl-tRNA synthetase family. Monomer.

The protein resides in the cytoplasm. It carries out the reaction tRNA(Gln) + L-glutamine + ATP = L-glutaminyl-tRNA(Gln) + AMP + diphosphate. This Buchnera aphidicola subsp. Schizaphis graminum (strain Sg) protein is Glutamine--tRNA ligase.